The following is a 206-amino-acid chain: Ras-related protein RABG3f (206 aa).

A GTP-binding site is contributed by 15-23 (GDSGVGKTS). The short motif at 37-45 (YKATIGADF) is the Effector region element. Residues 63-67 (DTAGQ), 125-128 (NKVD), and 158-159 (SA) contribute to the GTP site. 2 S-geranylgeranyl cysteine lipidation sites follow: cysteine 204 and cysteine 206. The residue at position 206 (cysteine 206) is a Cysteine methyl ester.

It belongs to the small GTPase superfamily. Rab family. In terms of assembly, interacts with VPS35A.

The protein resides in the endosome membrane. Its subcellular location is the vacuole membrane. The protein localises to the prevacuolar compartment membrane. Regulated by guanine nucleotide exchange factors (GEFs) which promote the exchange of bound GDP for free GTP. Regulated by the MON1-CCZ1 complex which serves as a link between Rab5 and Rab7 protein families in PVCs and mediates PVC maturation. Functionally, essential for trafficking from prevacuolar compartments to vacuoles. Involved in the trafficking of newly synthesized protein to vacuoles. Essential for plant growth. Participates in the recruitment of the core retromer components to the endosomal membrane by interacting with VPS35A. This is Ras-related protein RABG3f (RABG3F) from Arabidopsis thaliana (Mouse-ear cress).